We begin with the raw amino-acid sequence, 311 residues long: Ornithine carbamoyltransferase (311 aa).

Carbamoyl phosphate is bound by residues Q85, R109, and H136–Q139. L-ornithine-binding positions include N167, D231, and S235–M236. Residues C271–L272 and R299 each bind carbamoyl phosphate.

The protein belongs to the aspartate/ornithine carbamoyltransferase superfamily. OTCase family.

It is found in the cytoplasm. It carries out the reaction carbamoyl phosphate + L-ornithine = L-citrulline + phosphate + H(+). The protein operates within amino-acid biosynthesis; L-arginine biosynthesis; L-arginine from L-ornithine and carbamoyl phosphate: step 1/3. Reversibly catalyzes the transfer of the carbamoyl group from carbamoyl phosphate (CP) to the N(epsilon) atom of ornithine (ORN) to produce L-citrulline. The protein is Ornithine carbamoyltransferase (argF) of Geobacillus stearothermophilus (Bacillus stearothermophilus).